Reading from the N-terminus, the 664-residue chain is Type IV inositol polyphosphate 5-phosphatase 3 (664 aa).

Positions 35 to 76 (GRDPEYGADTDNESENEDAREDNDDSSSDEEGGSGSRGRESK) are disordered. Acidic residues predominate over residues 40 to 66 (YGADTDNESENEDAREDNDDSSSDEEG). 2 catalytic regions span residues 514–529 (ERIIWLGDLNYRLSSS) and 592–607 (PKRTPAWCDRVLSYGK).

This sequence belongs to the inositol polyphosphate 5-phosphatase family.

It carries out the reaction a 1,2-diacyl-sn-glycero-3-phospho-(1D-myo-inositol-4,5-bisphosphate) + H2O = a 1,2-diacyl-sn-glycero-3-phospho-(1D-myo-inositol 4-phosphate) + phosphate. The enzyme catalyses a 1,2-diacyl-sn-glycero-3-phospho-(1D-myo-inositol-3,4,5-trisphosphate) + H2O = a 1,2-diacyl-sn-glycero-3-phospho-(1D-myo-inositol-3,4-bisphosphate) + phosphate. Functionally, has phosphatase activity toward PtdIns(4,5)P2 and PtdIns(3,4,5)P3. The sequence is that of Type IV inositol polyphosphate 5-phosphatase 3 from Arabidopsis thaliana (Mouse-ear cress).